Consider the following 469-residue polypeptide: Biotin synthase (469 aa).

The region spanning 51–278 (MTVKVNYLVN…DKEIRMAGGR (228 aa)) is the Radical SAM core domain. 3 residues coordinate [4Fe-4S] cluster: cysteine 66, cysteine 70, and cysteine 73. Residues cysteine 110, cysteine 143, cysteine 203, and arginine 273 each contribute to the [2Fe-2S] cluster site. The segment at 326-469 (AGPDPSRDRH…GAGTSVAPNA (144 aa)) is disordered. Low complexity-rich tracts occupy residues 363-384 (GSAA…APAD) and 405-428 (AGGP…MSPA).

This sequence belongs to the radical SAM superfamily. Biotin synthase family. In terms of assembly, homodimer. It depends on [4Fe-4S] cluster as a cofactor. [2Fe-2S] cluster serves as cofactor.

It carries out the reaction (4R,5S)-dethiobiotin + (sulfur carrier)-SH + 2 reduced [2Fe-2S]-[ferredoxin] + 2 S-adenosyl-L-methionine = (sulfur carrier)-H + biotin + 2 5'-deoxyadenosine + 2 L-methionine + 2 oxidized [2Fe-2S]-[ferredoxin]. The protein operates within cofactor biosynthesis; biotin biosynthesis; biotin from 7,8-diaminononanoate: step 2/2. Its function is as follows. Catalyzes the conversion of dethiobiotin (DTB) to biotin by the insertion of a sulfur atom into dethiobiotin via a radical-based mechanism. The sequence is that of Biotin synthase from Kocuria rhizophila (strain ATCC 9341 / DSM 348 / NBRC 103217 / DC2201).